The sequence spans 90 residues: UPF0367 protein SYNPCC7002_A0153 (90 aa).

Belongs to the UPF0367 family.

The polypeptide is UPF0367 protein SYNPCC7002_A0153 (Picosynechococcus sp. (strain ATCC 27264 / PCC 7002 / PR-6) (Agmenellum quadruplicatum)).